A 328-amino-acid polypeptide reads, in one-letter code: B3 domain-containing protein At5g60140 (328 aa).

A DNA-binding region (TF-B3) is located at residues 13 to 109 (SKFFKPYLPS…FFNFSIFDHE (97 aa)). Residues 145–221 (LNSDDSDDSD…EDEDDLEDED (77 aa)) form a disordered region. 2 stretches are compositionally biased toward acidic residues: residues 148–182 (DDSDDSDNDYSVEDDNVAEDDDGLEDEVDVEAEDG) and 190–221 (GLEDEDDDEAEDGYDAKDDDGLEDEDDLEDED).

The protein resides in the nucleus. The chain is B3 domain-containing protein At5g60140 from Arabidopsis thaliana (Mouse-ear cress).